Here is a 557-residue protein sequence, read N- to C-terminus: Calcium-dependent protein kinase 4 (557 aa).

The disordered stretch occupies residues 1-72 (MGNTCRGSIG…LVSPRKASMN (72 aa)). The N-myristoyl glycine moiety is linked to residue Gly2. Positions 15–27 (QGYTQPEDSSCST) are enriched in polar residues. Low complexity predominate over residues 28–48 (NHNPSSGNSYSSSDNFSPTSN). A Protein kinase domain is found at 94 to 352 (YTLGRKLGQG…AHEVLCHPWI (259 aa)). Residues 100–108 (LGQGQFGTT) and Lys123 each bind ATP. Asp218 (proton acceptor) is an active-site residue. The segment at 358–388 (APDRALDPAVLSRLKQFSAMNKLKKMALRVI) is autoinhibitory domain. EF-hand domains are found at residues 395 to 430 (EEIA…YGST), 431 to 466 (LKDT…LNKL), 467 to 502 (EREE…HNMT), and 506 to 536 (FEDI…GNPC). Ca(2+) is bound by residues Asp408, Asp410, Ser412, Glu419, Asp444, Asp446, Ser448, Thr450, Glu455, Asp480, Asp482, Ser484, Tyr486, Glu491, Asp514, Asp516, Asp518, Arg520, and Glu525.

Belongs to the protein kinase superfamily. Ser/Thr protein kinase family. CDPK subfamily.

The protein resides in the membrane. The enzyme catalyses L-seryl-[protein] + ATP = O-phospho-L-seryl-[protein] + ADP + H(+). It catalyses the reaction L-threonyl-[protein] + ATP = O-phospho-L-threonyl-[protein] + ADP + H(+). With respect to regulation, activated by calcium. Autophosphorylation may play an important role in the regulation of the kinase activity. Its function is as follows. Regulates the production of reactive oxygen species (ROS) by NADPH oxidase. This is Calcium-dependent protein kinase 4 (CPK4) from Solanum tuberosum (Potato).